Here is a 157-residue protein sequence, read N- to C-terminus: Endoribonuclease YbeY (157 aa).

Residues His-122, His-126, and His-132 each coordinate Zn(2+).

The protein belongs to the endoribonuclease YbeY family. Requires Zn(2+) as cofactor.

The protein localises to the cytoplasm. In terms of biological role, single strand-specific metallo-endoribonuclease involved in late-stage 70S ribosome quality control and in maturation of the 3' terminus of the 16S rRNA. This is Endoribonuclease YbeY from Lysinibacillus sphaericus (strain C3-41).